Consider the following 456-residue polypeptide: Taurine--pyruvate aminotransferase (456 aa).

K280 carries the N6-(pyridoxal phosphate)lysine modification.

This sequence belongs to the class-III pyridoxal-phosphate-dependent aminotransferase family. As to quaternary structure, homotetramer. The cofactor is pyridoxal 5'-phosphate.

The catalysed reaction is taurine + pyruvate = sulfoacetaldehyde + L-alanine. It participates in organosulfur degradation; alkanesulfonate degradation. Functionally, involved in an anaerobic respiration pathway that converts the sulfonate taurine (2-aminoethanesulfonate) to ammonia, acetate and sulfide. Catalyzes the initial metabolic reaction of anaerobic taurine degradation, i.e. the transamination reaction between taurine and pyruvate leading to sulfoacetaldehyde and alanine. The polypeptide is Taurine--pyruvate aminotransferase (Bilophila wadsworthia (strain 3_1_6)).